The following is a 324-amino-acid chain: Elongation factor P--(R)-beta-lysine ligase (324 aa).

A substrate-binding site is contributed by Ser75–Glu77. ATP is bound by residues Arg99 to Lys101 and Asn108. Tyr117 contributes to the substrate binding site. ATP is bound at residue Glu243–Leu244. Glu250 serves as a coordination point for substrate. Gly299 serves as a coordination point for ATP.

It belongs to the class-II aminoacyl-tRNA synthetase family. EpmA subfamily. Homodimer.

It carries out the reaction D-beta-lysine + L-lysyl-[protein] + ATP = N(6)-((3R)-3,6-diaminohexanoyl)-L-lysyl-[protein] + AMP + diphosphate + H(+). With EpmB is involved in the beta-lysylation step of the post-translational modification of translation elongation factor P (EF-P). Catalyzes the ATP-dependent activation of (R)-beta-lysine produced by EpmB, forming a lysyl-adenylate, from which the beta-lysyl moiety is then transferred to the epsilon-amino group of a conserved specific lysine residue in EF-P. The protein is Elongation factor P--(R)-beta-lysine ligase of Buchnera aphidicola subsp. Acyrthosiphon pisum (strain 5A).